We begin with the raw amino-acid sequence, 2226 residues long: Histone-lysine N-methyltransferase ash1 (2226 aa).

Residues 1–145 (MSCSQNETAA…SDSEDDLPLK (145 aa)) are disordered. Polar residues predominate over residues 32–52 (ITDQSSQSKSIKSATQFSVQR). Residues 99-111 (AVSKKVKVKRKKL) show a composition bias toward basic residues. A phosphoserine mark is found at Ser-135, Ser-136, and Ser-138. Phosphothreonine is present on residues Thr-200 and Thr-201. A compositionally biased stretch (basic residues) spans 260–269 (PRKRRGRPKK). Disordered stretches follow at residues 260–324 (PRKR…IASS), 343–367 (RVLY…SSNK), 673–695 (AQQL…KRGL), 711–749 (SASA…HKLP), and 811–832 (KRHL…SNSP). A DNA-binding region (a.T hook 1) is located at residues 261–273 (RKRRGRPKKVVPT). A compositionally biased stretch (low complexity) spans 294–306 (STTSTTQSTTPSP). Residues 307–324 (KMQNENAVPTGSLPIASS) show a composition bias toward polar residues. Residues 711 to 727 (SASASGTPNGSGSSNGN) show a composition bias toward low complexity. Phosphoserine is present on residues Ser-740, Ser-831, and Ser-977. Residues 820 to 831 (SVSGAGSSASNS) show a composition bias toward low complexity. Disordered stretches follow at residues 980 to 1026 (QQTT…DCER) and 1049 to 1230 (SVVA…TTSL). The segment covering 989 to 999 (HEPEFDPDDEP) has biased composition (acidic residues). DNA-binding regions (a.T hook) lie at residues 1065–1077 (GRPR…NREQ) and 1095–1107 (AKKR…QPVL). Over residues 1108–1117 (EEPPPTPPPQ) the composition is skewed to pro residues. The segment covering 1186–1200 (AEAKRLDSIPTEHDP) has biased composition (basic and acidic residues). The span at 1205–1219 (ESHNPGPQDYASCSE) shows a compositional bias: polar residues. In terms of domain architecture, AWS spans 1339-1387 (FDHPTCNCKNQGEKSCLDNCLNRMVYTECSPSNCPAGEKCRNQKIQRHA). The region spanning 1390–1506 (PGVERFMTAD…EGEELTYDYN (117 aa)) is the SET domain. One can recognise a Post-SET domain in the interval 1514–1530 (EGQPCRCNTPQCRGVIG). 2 disordered regions span residues 1536 to 1575 (VKPL…GKDI) and 1616 to 1648 (RASD…SSPS). A compositionally biased stretch (basic residues) spans 1556–1568 (GRQRKQKAKKHAQ). 2 stretches are compositionally biased toward low complexity: residues 1619–1628 (DAAATASSPA) and 1639–1648 (RRPSTPSSPS). In terms of domain architecture, Bromo spans 1681-1789 (KMAVVLRDIC…DSYEQQKIAS (109 aa)). Positions 1808–1839 (PKEVLSSEEEPGKIAVKKSPGAKERDSPIVPL) are disordered. The segment at 1857–1903 (VIRCICGLYKDEGLMIQCSKCMVWQHTECTKADIDADNYQCERCEPR) adopts a PHD-type zinc-finger fold. The 121-residue stretch at 1952-2072 (KVLPTKKHTY…KTARFFSKAK (121 aa)) folds into the BAH domain. Residues 2205–2226 (SGRGARQRKTQQSSSSSTANST) are disordered. Over residues 2214 to 2226 (TQQSSSSSTANST) the composition is skewed to low complexity.

The protein belongs to the class V-like SAM-binding methyltransferase superfamily. Histone-lysine methyltransferase family. SET2 subfamily. As to quaternary structure, component of a large multiprotein complex distinct from complexes containing ash2 or brm. Interacts (via SET domain) with trx (via SET domain). Interacts with nej/cbp. As to expression, expressed throughout development but is present at higher levels during the embryonic and pupal stages than during the larval stages. During the larval stages it accumulates primarily in imaginal disks.

It localises to the nucleus. The protein localises to the chromosome. It catalyses the reaction L-lysyl(4)-[histone H3] + 3 S-adenosyl-L-methionine = N(6),N(6),N(6)-trimethyl-L-lysyl(4)-[histone H3] + 3 S-adenosyl-L-homocysteine + 3 H(+). In terms of biological role, trithorax group (TrxG) protein that has histone methyltransferase activity. Specifically trimethylates 'Lys-4' of histone H3 (H3K4me3), a specific tag for epigenetic transcriptional activation. TrxG proteins are generally required to maintain the transcriptionally active state of homeotic genes throughout development. Does not act as a coactivator required for transcriptional activation, but specifically prevents inappropriate Polycomb Group (PcG) silencing of homeotic genes in cells in which they must stay transcriptionally active. The sequence is that of Histone-lysine N-methyltransferase ash1 (ash1) from Drosophila melanogaster (Fruit fly).